Reading from the N-terminus, the 413-residue chain is Ribulose bisphosphate carboxylase large chain (413 aa).

Positions 100 and 150 each coordinate substrate. The active-site Proton acceptor is Lys-152. Lys-154 serves as a coordination point for substrate. The Mg(2+) site is built by Lys-178, Asp-180, and Glu-181. Lys-178 is modified (N6-carboxylysine). His-271 serves as the catalytic Proton acceptor. Substrate is bound by residues Arg-272, His-304, and Ser-356.

It belongs to the RuBisCO large chain family. Type I subfamily. In terms of assembly, heterohexadecamer of 8 large chains and 8 small chains; disulfide-linked. The disulfide link is formed within the large subunit homodimers. It depends on Mg(2+) as a cofactor. In terms of processing, the disulfide bond which can form in the large chain dimeric partners within the hexadecamer appears to be associated with oxidative stress and protein turnover.

It localises to the plastid. The protein localises to the chloroplast. The enzyme catalyses 2 (2R)-3-phosphoglycerate + 2 H(+) = D-ribulose 1,5-bisphosphate + CO2 + H2O. It carries out the reaction D-ribulose 1,5-bisphosphate + O2 = 2-phosphoglycolate + (2R)-3-phosphoglycerate + 2 H(+). Its function is as follows. RuBisCO catalyzes two reactions: the carboxylation of D-ribulose 1,5-bisphosphate, the primary event in carbon dioxide fixation, as well as the oxidative fragmentation of the pentose substrate in the photorespiration process. Both reactions occur simultaneously and in competition at the same active site. This chain is Ribulose bisphosphate carboxylase large chain (rbcL), found in Adiantum pedatum (Northern maidenhair fern).